The primary structure comprises 218 residues: Adenylate kinase (218 aa).

10 to 15 (GAGKGT) provides a ligand contact to ATP. Residues 30–59 (STGDMLRAAVKAGTPLGQQAKAVMESGGLV) form an NMP region. Residues T31, R36, 57-59 (GLV), 85-88 (GFPR), and Q92 each bind AMP. Residues 122 to 159 (GRRSHPASGRTYHVKFNPPKVEGKDDITGEDLIQRKDD) are LID. Residues R123 and 132 to 133 (TY) contribute to the ATP site. Residues R156 and R167 each contribute to the AMP site. An ATP-binding site is contributed by G203.

This sequence belongs to the adenylate kinase family. In terms of assembly, monomer.

Its subcellular location is the cytoplasm. The catalysed reaction is AMP + ATP = 2 ADP. It participates in purine metabolism; AMP biosynthesis via salvage pathway; AMP from ADP: step 1/1. Functionally, catalyzes the reversible transfer of the terminal phosphate group between ATP and AMP. Plays an important role in cellular energy homeostasis and in adenine nucleotide metabolism. This is Adenylate kinase from Variovorax paradoxus (strain S110).